A 169-amino-acid chain; its full sequence is uncharacterized protein (169 aa).

2 consecutive transmembrane segments (helical) span residues 10–30 and 149–169; these read NVHMYDVAIILILIIVVFKLI and IPLAFVQMIAISIALICLLIP.

It is found in the membrane. This is an uncharacterized protein from Dictyostelium discoideum (Social amoeba).